Here is a 216-residue protein sequence, read N- to C-terminus: Large ribosomal subunit protein uL24m (216 aa).

A mitochondrion-targeting transit peptide spans 1–9 (MRLSALLAL). Serine 24 is modified (phosphoserine). One can recognise a KOW domain in the interval 56 to 89 (LFCGDRVEILEGKDAGKQGKVVQVIRQRNWVVVE).

Belongs to the universal ribosomal protein uL24 family. As to quaternary structure, component of the mitochondrial ribosome large subunit (39S) which comprises a 16S rRNA and about 50 distinct proteins.

The protein localises to the mitochondrion. This chain is Large ribosomal subunit protein uL24m (MRPL24), found in Bos taurus (Bovine).